Here is a 254-residue protein sequence, read N- to C-terminus: Leucyl/phenylalanyl-tRNA--protein transferase (254 aa).

It belongs to the L/F-transferase family.

Its subcellular location is the cytoplasm. It catalyses the reaction N-terminal L-lysyl-[protein] + L-leucyl-tRNA(Leu) = N-terminal L-leucyl-L-lysyl-[protein] + tRNA(Leu) + H(+). It carries out the reaction N-terminal L-arginyl-[protein] + L-leucyl-tRNA(Leu) = N-terminal L-leucyl-L-arginyl-[protein] + tRNA(Leu) + H(+). The enzyme catalyses L-phenylalanyl-tRNA(Phe) + an N-terminal L-alpha-aminoacyl-[protein] = an N-terminal L-phenylalanyl-L-alpha-aminoacyl-[protein] + tRNA(Phe). In terms of biological role, functions in the N-end rule pathway of protein degradation where it conjugates Leu, Phe and, less efficiently, Met from aminoacyl-tRNAs to the N-termini of proteins containing an N-terminal arginine or lysine. This Burkholderia vietnamiensis (strain G4 / LMG 22486) (Burkholderia cepacia (strain R1808)) protein is Leucyl/phenylalanyl-tRNA--protein transferase.